Consider the following 168-residue polypeptide: UPF0262 protein BRADO6636 (168 aa).

The protein belongs to the UPF0262 family.

The polypeptide is UPF0262 protein BRADO6636 (Bradyrhizobium sp. (strain ORS 278)).